Here is a 214-residue protein sequence, read N- to C-terminus: NADH-quinone oxidoreductase subunit C (214 aa).

Belongs to the complex I 30 kDa subunit family. NDH-1 is composed of 14 different subunits. Subunits NuoB, C, D, E, F, and G constitute the peripheral sector of the complex.

Its subcellular location is the cell inner membrane. The enzyme catalyses a quinone + NADH + 5 H(+)(in) = a quinol + NAD(+) + 4 H(+)(out). NDH-1 shuttles electrons from NADH, via FMN and iron-sulfur (Fe-S) centers, to quinones in the respiratory chain. The immediate electron acceptor for the enzyme in this species is believed to be ubiquinone. Couples the redox reaction to proton translocation (for every two electrons transferred, four hydrogen ions are translocated across the cytoplasmic membrane), and thus conserves the redox energy in a proton gradient. This chain is NADH-quinone oxidoreductase subunit C, found in Francisella tularensis subsp. mediasiatica (strain FSC147).